The chain runs to 292 residues: Tetratricopeptide repeat protein 1 (292 aa).

A disordered region spans residues 23–125 (TQEAECAGPP…STRLKEEGNE (103 aa)). Basic and acidic residues-rich tracts occupy residues 45 to 55 (LLRDDEAHLQE) and 75 to 85 (GADKVENKSNE). 2 positions are modified to phosphoserine: serine 83 and serine 90. Over residues 99–125 (ELEKNMSDEEKQKRREESTRLKEEGNE) the composition is skewed to basic and acidic residues. TPR repeat units lie at residues 116-149 (STRL…CPSC), 155-188 (SILF…NPSY), and 189-222 (IRAI…DPSI).

As to quaternary structure, interacts with the GAP domain of NF1. Interacts (via TPR repeats) with HSP90AA1 and HSPA8.

In Homo sapiens (Human), this protein is Tetratricopeptide repeat protein 1 (TTC1).